The primary structure comprises 312 residues: Putative S-adenosyl-L-methionine-dependent methyltransferase Mkms_0097 (312 aa).

Residues D134 and 163–164 contribute to the S-adenosyl-L-methionine site; that span reads DL.

This sequence belongs to the UPF0677 family.

In terms of biological role, exhibits S-adenosyl-L-methionine-dependent methyltransferase activity. The polypeptide is Putative S-adenosyl-L-methionine-dependent methyltransferase Mkms_0097 (Mycobacterium sp. (strain KMS)).